The chain runs to 730 residues: Nitrogen fixation protein FixI (730 aa).

Residues M1 to R101 lie on the Cytoplasmic side of the membrane. An HMA domain is found at K19–Y85. The a metal cation site is built by C30 and C33. Residues F102 to P123 traverse the membrane as a helical segment. The Extracellular segment spans residues V124 to D138. Residues F139–S162 form a helical membrane-spanning segment. The Cytoplasmic segment spans residues A163 to S168. A helical membrane pass occupies residues A169–V190. At V191–F202 the chain is on the extracellular side. Residues D203 to R223 form a helical membrane-spanning segment. Topologically, residues R224–R352 are cytoplasmic. A helical membrane pass occupies residues A353 to A375. At G376–A382 the chain is on the extracellular side. The helical transmembrane segment at I383–L400 threads the bilayer. The Cytoplasmic segment spans residues A401–M676. Catalysis depends on D438, which acts as the 4-aspartylphosphate intermediate. 2 residues coordinate Mg(2+): D622 and D626. A helical membrane pass occupies residues R677–S696. Topologically, residues G697–P701 are extracellular. A helical membrane pass occupies residues L702–L720. The Cytoplasmic portion of the chain corresponds to R721–V730.

The protein belongs to the cation transport ATPase (P-type) (TC 3.A.3) family. Type IB subfamily.

It is found in the cell membrane. It catalyses the reaction ATP + H2O = ADP + phosphate + H(+). Functionally, fixI is a pump of a specific cation involved in symbiotic nitrogen fixation. The four proteins FixG, FixH, FixI, and FixS may participate in a membrane-bound complex coupling the FixI cation pump with a redox process catalyzed by FixG. This is Nitrogen fixation protein FixI (fixI) from Bradyrhizobium diazoefficiens (strain JCM 10833 / BCRC 13528 / IAM 13628 / NBRC 14792 / USDA 110).